The following is a 193-amino-acid chain: Glycerol-3-phosphate acyltransferase (193 aa).

Helical transmembrane passes span 2-22 (AFII…AVIV), 51-71 (QAAF…VLIA), 78-98 (GVSL…PVYF), 112-132 (VLLG…VIVV), and 154-174 (IIAG…LLIW).

This sequence belongs to the PlsY family. Probably interacts with PlsX.

The protein resides in the cell inner membrane. The catalysed reaction is an acyl phosphate + sn-glycerol 3-phosphate = a 1-acyl-sn-glycero-3-phosphate + phosphate. It participates in lipid metabolism; phospholipid metabolism. Its function is as follows. Catalyzes the transfer of an acyl group from acyl-phosphate (acyl-PO(4)) to glycerol-3-phosphate (G3P) to form lysophosphatidic acid (LPA). This enzyme utilizes acyl-phosphate as fatty acyl donor, but not acyl-CoA or acyl-ACP. This Coxiella burnetii (strain CbuG_Q212) (Coxiella burnetii (strain Q212)) protein is Glycerol-3-phosphate acyltransferase.